The primary structure comprises 148 residues: Lipoprotein MlpA (148 aa).

A signal peptide spans 1–17; the sequence is MKIINILFCLFLLLLNS. Residue Cys-18 is the site of N-palmitoyl cysteine attachment. Cys-18 is lipidated: S-diacylglycerol cysteine. A disordered region spans residues 26 to 58; the sequence is LKNNAQQTKSRGKRDLTQKEATPEKPKSKEELL. Residues 38 to 58 show a composition bias toward basic and acidic residues; that stretch reads KRDLTQKEATPEKPKSKEELL.

Belongs to the Multicopy lipoprotein (Mlp) family.

The protein localises to the cell outer membrane. In terms of biological role, an outer membrane protein that may participate in pathogenesis. Some human Lyme disease patients have antibodies against this protein. The Mlp proteins probably undergo intragenic recombination, generating new alleles. The chain is Lipoprotein MlpA (mlpA) from Borreliella burgdorferi (strain ATCC 35210 / DSM 4680 / CIP 102532 / B31) (Borrelia burgdorferi).